Reading from the N-terminus, the 152-residue chain is Transcription factor XE1.1 (152 aa).

2 disordered regions span residues 1–54 (RDDF…ANNA) and 123–152 (KVSA…MGHM). 2 stretches are compositionally biased toward basic and acidic residues: residues 7-22 (DDMK…EMKS) and 38-54 (PEQK…ANNA). The 54-residue stretch at 47–100 (ERRMANNARERLRVRDINEAFKELGRMCQLHLKSEKPQTKLLILHQAVAVILNL) folds into the bHLH domain. The interval 102-125 (QQVRERNLNPKAACLKRREEEKVS) is class A specific domain. Residues 143-152 (TDTTNPMGHM) are compositionally biased toward polar residues.

Efficient DNA binding requires dimerization with another bHLH protein. Forms homo- or heterooligomers with myogenin, E12 and ITF2 proteins.

The protein localises to the nucleus. Transcriptional regulator. Involved in the initiation of neuronal differentiation. Activates transcription by binding to the E box-containing promoter. This chain is Transcription factor XE1.1, found in Xenopus laevis (African clawed frog).